Here is a 364-residue protein sequence, read N- to C-terminus: Alanine racemase (364 aa).

Lys35 (proton acceptor; specific for D-alanine) is an active-site residue. Lys35 carries the N6-(pyridoxal phosphate)lysine modification. Arg132 serves as a coordination point for substrate. The active-site Proton acceptor; specific for L-alanine is the Tyr260. Position 308 (Met308) interacts with substrate.

It belongs to the alanine racemase family. The cofactor is pyridoxal 5'-phosphate.

The enzyme catalyses L-alanine = D-alanine. Its pathway is amino-acid biosynthesis; D-alanine biosynthesis; D-alanine from L-alanine: step 1/1. Catalyzes the interconversion of L-alanine and D-alanine. May also act on other amino acids. The chain is Alanine racemase (alr) from Acidithiobacillus ferrooxidans (strain ATCC 23270 / DSM 14882 / CIP 104768 / NCIMB 8455) (Ferrobacillus ferrooxidans (strain ATCC 23270)).